Reading from the N-terminus, the 349-residue chain is Hepatic sodium/bile acid cotransporter (349 aa).

At 1–22 the chain is on the extracellular side; that stretch reads MEAHNASAPFNFTLPPNFGKRP. 2 N-linked (GlcNAc...) asparagine glycosylation sites follow: Asn5 and Asn11. A helical membrane pass occupies residues 23-44; sequence TDLALSVILVFMLFFIMLSLGC. The Cytoplasmic portion of the chain corresponds to 45-47; the sequence is TME. A helical transmembrane segment spans residues 48-83; it reads FSKIKAHLWKPKGLAIALVAQYGIMPLTAFVLGKVF. The Extracellular segment spans residues 84–86; the sequence is RLK. The discontinuously helical transmembrane segment at 87–112 threads the bilayer; that stretch reads NIEALAILVCGCSPGGNLSNVFSLAM. Residues 113-115 are Cytoplasmic-facing; it reads KGD. Residues 116 to 142 form a helical membrane-spanning segment; that stretch reads MNLSIVMTTCSTFCALGMMPLLLYIYS. At 143–156 the chain is on the extracellular side; that stretch reads RGIYDGDLKDKVPY. The helical transmembrane segment at 157–179 threads the bilayer; the sequence is KGIVISLVLVLIPCTIGIVLKSK. Residues 180-183 lie on the Cytoplasmic side of the membrane; it reads RPQY. Residues 184–217 traverse the membrane as a helical segment; it reads MRYVIKGGMIIILLCSVAVTVLSAINVGKSIMFA. Topologically, residues 218-219 are extracellular; the sequence is MT. The chain crosses the membrane as a helical span at residues 220 to 243; sequence PLLIATSSLMPFIGFLLGYVLSAL. Residues 244-247 lie on the Cytoplasmic side of the membrane; it reads FCLN. Residues 248-273 form a discontinuously helical membrane-spanning segment; the sequence is GRCRRTVSMETGCQNVQLCSTILNVA. Residues 274-280 lie on the Extracellular side of the membrane; the sequence is FPPEVIG. Residues 281–311 traverse the membrane as a helical segment; it reads PLFFFPLLYMIFQLGEGLLLIAIFWCYEKFK. Over 312–349 the chain is Cytoplasmic; that stretch reads TPKDKTKMIYTAATTEETIPGALGNGTYKGEDCSPCTA.

It belongs to the bile acid:sodium symporter (BASS) (TC 2.A.28) family. As to quaternary structure, (Microbial infection) Interacts with the myristoylated pre-S1 domain of hepatitis B virus large envelope protein; myristoylation is essential for this interaction. As to expression, expressed in liver. Expressed in placental trophoblasts.

It is found in the cell membrane. The enzyme catalyses taurocholate(out) + 2 Na(+)(out) = taurocholate(in) + 2 Na(+)(in). It catalyses the reaction cholate(out) + 2 Na(+)(out) = cholate(in) + 2 Na(+)(in). The catalysed reaction is estrone 3-sulfate(out) + 2 Na(+)(out) = estrone 3-sulfate(in) + 2 Na(+)(in). It carries out the reaction taurochenodeoxycholate(out) + 2 Na(+)(out) = taurochenodeoxycholate(in) + 2 Na(+)(in). The enzyme catalyses tauroursodeoxycholate(out) + 2 Na(+)(out) = tauroursodeoxycholate(in) + 2 Na(+)(in). It catalyses the reaction glycocholate(out) + 2 Na(+)(out) = glycocholate(in) + 2 Na(+)(in). The catalysed reaction is tauronorcholate(out) + 2 Na(+)(out) = tauronorcholate(in) + 2 Na(+)(in). It carries out the reaction taurodeoxycholate(out) + 2 Na(+)(out) = taurodeoxycholate(in) + 2 Na(+)(in). The enzyme catalyses tauroallocholate(out) + 2 Na(+)(out) = tauroallocholate(in) + 2 Na(+)(in). It catalyses the reaction taurohyodeoxycholate(out) + 2 Na(+)(out) = taurohyodeoxycholate(in) + 2 Na(+)(in). The catalysed reaction is taurohyocholate(out) + 2 Na(+)(out) = taurohyocholate(in) + 2 Na(+)(in). It carries out the reaction tauro-beta-muricholate(out) + 2 Na(+)(out) = tauro-beta-muricholate(in) + 2 Na(+)(in). Its activity is regulated as follows. The transport of bile acids is sodium-dependent. As a major transporter of conjugated bile salts from plasma into the hepatocyte, it plays a key role in the enterohepatic circulation of bile salts necessary for the solubilization and absorption of dietary fat and fat-soluble vitamins. It is strictly dependent on the extracellular presence of sodium. It exhibits broad substrate specificity and transports various bile acids, such as taurocholate, cholate, as well as non-bile acid organic compounds, such as estrone sulfate. Works collaboratively with the ileal transporter (NTCP2), the organic solute transporter (OST), and the bile salt export pump (BSEP), to ensure efficacious biological recycling of bile acids during enterohepatic circulation. Functionally, (Microbial infection) Acts as an entry receptor for hepatitis B virus (HBV). The recognition for human SLC10A1/NTCP is highly specific. The polypeptide is Hepatic sodium/bile acid cotransporter (SLC10A1) (Homo sapiens (Human)).